Consider the following 497-residue polypeptide: Malonate-semialdehyde dehydrogenase (497 aa).

NAD(+)-binding residues include Phe148, Lys172, Glu175, Arg176, and Ser225. Catalysis depends on Cys280, which acts as the Nucleophile. Position 382 (Glu382) interacts with NAD(+).

This sequence belongs to the aldehyde dehydrogenase family.

The enzyme catalyses 3-oxopropanoate + NAD(+) + CoA + H2O = hydrogencarbonate + acetyl-CoA + NADH + H(+). Involved in the degradation of beta-alanine. Likely catalyzes the NAD(+)- and CoA-dependent oxidative decarboxylation of malonate semialdehyde (3-oxopropanoate) to acetyl-CoA. This Pseudomonas aeruginosa (strain ATCC 15692 / DSM 22644 / CIP 104116 / JCM 14847 / LMG 12228 / 1C / PRS 101 / PAO1) protein is Malonate-semialdehyde dehydrogenase.